We begin with the raw amino-acid sequence, 240 residues long: MASLKRSNDRKVTNYVHVTKGGNATVGIANSIGLPSGQGFSCPDATAFCAKVCYAGKLEKVRKAVSSVLLHNWELLRDADLTDTVTLLSEMMADFVKDCDKKKAPKLFRIHWDGDFFSPTYVAAWARVIRDFSDVQFWAYTRVQTAAVYLHAQKLSNLSLYFSADPDNVDVARFLEGKGINIAYVDTTFAEGKAQFPTAVRCPELNNRDFDLINAKGSACARCGLCINGRKSVLFSTTKK.

This Mycobacterium phage D29 (Mycobacteriophage D29) protein is Gene 88 protein (88).